Consider the following 432-residue polypeptide: Proteinase-activated receptor 1 (432 aa).

Positions 1–21 are cleaved as a signal peptide; the sequence is MGPRRLLLVAVGLSLCGPLLS. Positions 22–45 are cleaved as a propeptide — removed for receptor activation; the sequence is SRVPMRQPESERMYATPYATPNPR. Topologically, residues 46–109 are extracellular; the sequence is SFFLRNPSED…SGYLTSPWLT (64 aa). 2 N-linked (GlcNAc...) asparagine glycosylation sites follow: asparagine 69 and asparagine 82. Residues 110-135 form a helical membrane-spanning segment; sequence LFIPSVYTFVFIVSLPLNILAIAVFV. The Cytoplasmic segment spans residues 136-144; it reads FRMKVKKPA. The chain crosses the membrane as a helical span at residues 145–164; sequence VVYMLHLAMADVLFVSVLPF. Topologically, residues 165–183 are extracellular; that stretch reads KISYYFSGTDWQFGSGMCR. Cysteines 182 and 261 form a disulfide. A helical transmembrane segment spans residues 184–205; that stretch reads FATAACYCNMYASIMLMTVISI. The Cytoplasmic portion of the chain corresponds to 206–225; that stretch reads DRFLAVVYPIQSLSWRTLGR. Residues 226-246 traverse the membrane as a helical segment; the sequence is ANFTCVVIWVMAIMGVVPLLL. Over 247-275 the chain is Extracellular; the sequence is KEQTTQVPGLNITTCHDVLNETLLHGFYS. N-linked (GlcNAc...) asparagine glycans are attached at residues asparagine 257 and asparagine 266. The helical transmembrane segment at 276-295 threads the bilayer; it reads YYFSAFSAIFFLVPLIISTV. Over 296 to 318 the chain is Cytoplasmic; that stretch reads CYTSIIRCLSSSAVANRSKKSRA. Residues 319–341 traverse the membrane as a helical segment; sequence LFLSAAVFCIFIVCFGPTNVLLI. At 342 to 357 the chain is on the extracellular side; the sequence is VHYLLLSDSPGTETAY. Residues 358 to 381 form a helical membrane-spanning segment; that stretch reads FAYLLCVCVTSVASCIDPLIYYYA. The Cytoplasmic segment spans residues 382-432; the sequence is SSECQKHLYSILCCRESSDSNSCNSTGQLMPSKMDTCSSHLNNSIYKKLLA. At serine 425 the chain carries Phosphoserine.

This sequence belongs to the G-protein coupled receptor 1 family. Post-translationally, proteolytic cleavage by thrombin generates a new N-terminus that functions as a tethered ligand. Also proteolytically cleaved by cathepsin CTSG. In terms of processing, phosphorylated in the C-terminal tail; probably mediating desensitization prior to the uncoupling and internalization of the receptor. Expressed in primary cultured oligodendrocytes.

Its subcellular location is the cell membrane. Functionally, high affinity receptor that binds the activated thrombin, leading to calcium release from intracellular stores. The thrombin-activated receptor signaling pathway is mediated through PTX-insensitive G proteins, activation of phospholipase C resulting in the production of 1D-myo-inositol 1,4,5-trisphosphate (InsP3) which binds to InsP3 receptors causing calcium release from the stores. In astrocytes, the calcium released into the cytosol allows the Ca(2+)-dependent release of L-glutamate into the synaptic cleft through BEST1, that targets the neuronal postsynaptic GRIN2A/NMDAR receptor resulting in the synaptic plasticity regulation. May play a role in platelets activation and in vascular development. Mediates up-regulation of pro-inflammatory cytokines, such as MCP-1/CCL2 and IL6, triggered by coagulation factor Xa (F10) in cardiac fibroblasts and umbilical vein endothelial cells. The polypeptide is Proteinase-activated receptor 1 (Rattus norvegicus (Rat)).